We begin with the raw amino-acid sequence, 351 residues long: DNA-directed RNA polymerase subunit alpha (351 aa).

Residues 1–236 (MSVNTKNWQE…DQLTLFVHFE (236 aa)) form an alpha N-terminal domain (alpha-NTD) region. The alpha C-terminal domain (alpha-CTD) stretch occupies residues 256–351 (DDANQLNRYL…AKKLEQELLG (96 aa)).

Belongs to the RNA polymerase alpha chain family. As to quaternary structure, homodimer. The RNAP catalytic core consists of 2 alpha, 1 beta, 1 beta' and 1 omega subunit. When a sigma factor is associated with the core the holoenzyme is formed, which can initiate transcription.

It catalyses the reaction RNA(n) + a ribonucleoside 5'-triphosphate = RNA(n+1) + diphosphate. DNA-dependent RNA polymerase catalyzes the transcription of DNA into RNA using the four ribonucleoside triphosphates as substrates. The sequence is that of DNA-directed RNA polymerase subunit alpha from Erythrobacter litoralis (strain HTCC2594).